Reading from the N-terminus, the 265-residue chain is 4-hydroxy-tetrahydrodipicolinate reductase (265 aa).

Residues 7 to 12 and Asp33 each bind NAD(+); that span reads GASGRM. Arg34 serves as a coordination point for NADP(+). NAD(+) is bound by residues 96–98 and 120–123; these read GTT and AANM. Catalysis depends on His153, which acts as the Proton donor/acceptor. His154 serves as a coordination point for (S)-2,3,4,5-tetrahydrodipicolinate. Residue Lys157 is the Proton donor of the active site. Residue 163–164 participates in (S)-2,3,4,5-tetrahydrodipicolinate binding; that stretch reads GT.

Belongs to the DapB family.

Its subcellular location is the cytoplasm. It carries out the reaction (S)-2,3,4,5-tetrahydrodipicolinate + NAD(+) + H2O = (2S,4S)-4-hydroxy-2,3,4,5-tetrahydrodipicolinate + NADH + H(+). The catalysed reaction is (S)-2,3,4,5-tetrahydrodipicolinate + NADP(+) + H2O = (2S,4S)-4-hydroxy-2,3,4,5-tetrahydrodipicolinate + NADPH + H(+). It functions in the pathway amino-acid biosynthesis; L-lysine biosynthesis via DAP pathway; (S)-tetrahydrodipicolinate from L-aspartate: step 4/4. Catalyzes the conversion of 4-hydroxy-tetrahydrodipicolinate (HTPA) to tetrahydrodipicolinate. The sequence is that of 4-hydroxy-tetrahydrodipicolinate reductase from Burkholderia lata (strain ATCC 17760 / DSM 23089 / LMG 22485 / NCIMB 9086 / R18194 / 383).